A 364-amino-acid chain; its full sequence is Spermidine/putrescine import ATP-binding protein PotA (364 aa).

The ABC transporter domain maps to 5 to 235; that stretch reads LSFKDVSKGF…PVNRFVADFI (231 aa). Residue 37-44 coordinates ATP; it reads GPSGCGKT.

It belongs to the ABC transporter superfamily. Spermidine/putrescine importer (TC 3.A.1.11.1) family. As to quaternary structure, the complex is composed of two ATP-binding proteins (PotA), two transmembrane proteins (PotB and PotC) and a solute-binding protein (PotD).

Its subcellular location is the cell membrane. It carries out the reaction ATP + H2O + polyamine-[polyamine-binding protein]Side 1 = ADP + phosphate + polyamineSide 2 + [polyamine-binding protein]Side 1.. Functionally, part of the ABC transporter complex PotABCD involved in spermidine/putrescine import. Responsible for energy coupling to the transport system. The chain is Spermidine/putrescine import ATP-binding protein PotA from Staphylococcus epidermidis (strain ATCC 35984 / DSM 28319 / BCRC 17069 / CCUG 31568 / BM 3577 / RP62A).